Here is a 791-residue protein sequence, read N- to C-terminus: Diacylglycerol kinase gamma (791 aa).

Disordered stretches follow at residues Lys-82 to Ala-103 and Asp-117 to Ser-154. The segment covering Pro-83–Thr-92 has biased composition (basic and acidic residues). The segment covering Gly-94 to Ala-103 has biased composition (polar residues). EF-hand domains lie at Arg-175–Ile-210 and Glu-220–Leu-255. Ca(2+) is bound by residues Asp-188, Asp-190, Asn-192, Glu-199, Asp-233, Asp-235, Asp-237, and Glu-244. Phorbol-ester/DAG-type zinc fingers lie at residues Arg-271 to Cys-321 and Gln-336 to Gly-385. A DAGKc domain is found at Pro-430 to Pro-564. Residues Ala-768–Asp-791 are disordered.

Belongs to the eukaryotic diacylglycerol kinase family. In terms of tissue distribution, predominantly expressed in retina and in a much lesser extent in the brain. Other tissues contain extremely low levels of DGK-gamma.

The protein resides in the membrane. It is found in the cytoplasm. It localises to the cytosol. The protein localises to the cytoskeleton. It catalyses the reaction a 1,2-diacyl-sn-glycerol + ATP = a 1,2-diacyl-sn-glycero-3-phosphate + ADP + H(+). It carries out the reaction 1,2-didecanoyl-sn-glycerol + ATP = 1,2-didecanoyl-sn-glycero-3-phosphate + ADP + H(+). The enzyme catalyses 1-octadecanoyl-2-(5Z,8Z,11Z,14Z-eicosatetraenoyl)-sn-glycerol + ATP = 1-octadecanoyl-2-(5Z,8Z,11Z,14Z-eicosatetraenoyl)-sn-glycero-3-phosphate + ADP + H(+). The catalysed reaction is 1,2-di-(9Z-octadecenoyl)-sn-glycerol + ATP = 1,2-di-(9Z-octadecenoyl)-sn-glycero-3-phosphate + ADP + H(+). It catalyses the reaction 1-octadecanoyl-2-(9Z,12Z)-octadecadienoyl-sn-glycerol + ATP = 1-octadecanoyl-2-(9Z,12Z-octadecadienoyl)-sn-glycero-3-phosphate + ADP + H(+). Its pathway is lipid metabolism; glycerolipid metabolism. The activity is calcium-dependent. Requires phosphatidylserine for maximal activity. Its function is as follows. Diacylglycerol kinase that converts diacylglycerol/DAG into phosphatidic acid/phosphatidate/PA and regulates the respective levels of these two bioactive lipids. Thereby, acts as a central switch between the signaling pathways activated by these second messengers with different cellular targets and opposite effects in numerous biological processes. Has no apparent specificity with regard to the acyl compositions of diacylglycerol. Specifically expressed in the cerebellum where it controls the level of diacylglycerol which in turn regulates the activity of protein kinase C gamma. Through protein kinase C gamma, indirectly regulates the dendritic development of Purkinje cells, cerebellar long term depression and ultimately cerebellar motor coordination. This is Diacylglycerol kinase gamma (DGKG) from Homo sapiens (Human).